Reading from the N-terminus, the 881-residue chain is Nitrate reductase [NADH] 1 (881 aa).

The segment at 1–46 (MAASVEHRPFTSHQHGVVRSFKSYPDVPRPKKLPLPQPLSDSTNDN) is disordered. Cysteine 167 is a binding site for Mo-molybdopterin. One can recognise a Cytochrome b5 heme-binding domain in the interval 515 to 590 (TKSYSLSEVR…LEDYRIGELM (76 aa)). Heme contacts are provided by histidine 550 and histidine 573. Residues 625–737 (REKIPCKLLS…KGPLGHIEYT (113 aa)) enclose the FAD-binding FR-type domain. Residues 677 to 680 (RAYT), 694 to 698 (VVKVY), phenylalanine 699, phenylalanine 706, 711 to 713 (IMS), and threonine 764 contribute to the FAD site.

The protein belongs to the nitrate reductase family. As to quaternary structure, homodimer. The cofactor is FAD. It depends on heme as a cofactor. Requires Mo-molybdopterin as cofactor.

It catalyses the reaction nitrite + NAD(+) + H2O = nitrate + NADH + H(+). Its function is as follows. Nitrate reductase is a key enzyme involved in the first step of nitrate assimilation in plants, fungi and bacteria. The chain is Nitrate reductase [NADH] 1 (NIA1) from Phaseolus vulgaris (Kidney bean).